A 385-amino-acid chain; its full sequence is Pectate lyase E (385 aa).

Residues 1–30 form the signal peptide; it reads MKNTRVRSIGTKSLLAAVVTAALMATSAYA. Ca(2+) is bound at residue Asp-164. The stretch at 177-182 is repeat 1; it reads DHVTIS. Residues 177-218 are 2 X 6 AA approximate repeats; it reads DHVTISDGSFTDDKYTTKDGEKYVQHDGALDIKKGSDYVTIS. Asp-207 contributes to the Ca(2+) binding site. The stretch at 213 to 218 is repeat 2; sequence DYVTIS. Arg-260 is an active-site residue.

This sequence belongs to the polysaccharide lyase 1 family. PLBC subfamily. It depends on Ca(2+) as a cofactor.

Its subcellular location is the secreted. The enzyme catalyses Eliminative cleavage of (1-&gt;4)-alpha-D-galacturonan to give oligosaccharides with 4-deoxy-alpha-D-galact-4-enuronosyl groups at their non-reducing ends.. It functions in the pathway glycan metabolism; pectin degradation; 2-dehydro-3-deoxy-D-gluconate from pectin: step 2/5. Involved in maceration and soft-rotting of plant tissue. The chain is Pectate lyase E (pelE) from Dickeya chrysanthemi (Pectobacterium chrysanthemi).